Reading from the N-terminus, the 619-residue chain is Translation initiation factor IF-2 (619 aa).

2 stretches are compositionally biased toward low complexity: residues 1–18 (MTLNKKTNNENSSKTTPK) and 98–111 (PPQLQPQTPSLTKT). 2 disordered regions span residues 1-24 (MTLNKKTNNENSSKTTPKLSKETD) and 90-113 (SEPQEKHTPPQLQPQTPSLTKTKP). Residues 121 to 289 (KKSPIVTIMG…ILLVSEIQNL (169 aa)) form the tr-type G domain. The segment at 130–137 (GHVDHGKT) is G1. 130-137 (GHVDHGKT) is a binding site for GTP. The tract at residues 155–159 (GITQH) is G2. The segment at 176-179 (DTPG) is G3. GTP contacts are provided by residues 176-180 (DTPGH) and 230-233 (NKID). The interval 230–233 (NKID) is G4. Positions 266-268 (SAL) are G5.

Belongs to the TRAFAC class translation factor GTPase superfamily. Classic translation factor GTPase family. IF-2 subfamily.

The protein resides in the cytoplasm. Its function is as follows. One of the essential components for the initiation of protein synthesis. Protects formylmethionyl-tRNA from spontaneous hydrolysis and promotes its binding to the 30S ribosomal subunits. Also involved in the hydrolysis of GTP during the formation of the 70S ribosomal complex. This is Translation initiation factor IF-2 from Onion yellows phytoplasma (strain OY-M).